A 469-amino-acid chain; its full sequence is Secreted triacylglycerol lipase LIP3 (469 aa).

A signal peptide spans 1–21; sequence MVSLLWKFTLLCLFLLACTSA. Residues Cys-121 and Cys-292 are joined by a disulfide bond. Ser-205 (nucleophile) is an active-site residue. A glycan (N-linked (GlcNAc...) asparagine) is linked at Asn-238. Residues Asp-352 and His-386 contribute to the active site.

The protein belongs to the AB hydrolase superfamily. Lipase family. Class Lip subfamily.

It is found in the secreted. The catalysed reaction is a triacylglycerol + H2O = a diacylglycerol + a fatty acid + H(+). It catalyses the reaction a monoacylglycerol + H2O = glycerol + a fatty acid + H(+). It carries out the reaction a diacylglycerol + H2O = a monoacylglycerol + a fatty acid + H(+). Functionally, secreted lipase that hydrolyzes acylglycerol lipids such as triacylglycerols and consequently releases free fatty acid. Generates free oleic acid from the substrates mono- and diolein and hydrolyzes triolein in significant amounts. Due to an absence of fatty acid synthase genes in Malassezia species, secretory lipases are essential for the yeast to generate free fatty acids from degradation of sebum and assimilate them as lipid sources for growth. Plays an essential role at the pathogen-host interface during disease progression. Performs also the reverse reaction to build diacyl- and triacyl- glycerols from monoacylglycerols. The polypeptide is Secreted triacylglycerol lipase LIP3 (Malassezia restricta (strain ATCC 96810 / NBRC 103918 / CBS 7877) (Seborrheic dermatitis infection agent)).